A 159-amino-acid polypeptide reads, in one-letter code: 2-C-methyl-D-erythritol 2,4-cyclodiphosphate synthase (159 aa).

Asp10 and His12 together coordinate a divalent metal cation. Residues 10–12 (DVH) and 36–37 (HS) contribute to the 4-CDP-2-C-methyl-D-erythritol 2-phosphate site. A divalent metal cation is bound at residue His44. 4-CDP-2-C-methyl-D-erythritol 2-phosphate is bound by residues 58 to 60 (DIG), 63 to 67 (FPDTD), 102 to 108 (AQAPKMA), 134 to 137 (TTTE), Phe141, 141 to 144 (FTGR), and Arg144.

Belongs to the IspF family. As to quaternary structure, homotrimer. The cofactor is a divalent metal cation.

It carries out the reaction 4-CDP-2-C-methyl-D-erythritol 2-phosphate = 2-C-methyl-D-erythritol 2,4-cyclic diphosphate + CMP. It participates in isoprenoid biosynthesis; isopentenyl diphosphate biosynthesis via DXP pathway; isopentenyl diphosphate from 1-deoxy-D-xylulose 5-phosphate: step 4/6. Its function is as follows. Involved in the biosynthesis of isopentenyl diphosphate (IPP) and dimethylallyl diphosphate (DMAPP), two major building blocks of isoprenoid compounds. Catalyzes the conversion of 4-diphosphocytidyl-2-C-methyl-D-erythritol 2-phosphate (CDP-ME2P) to 2-C-methyl-D-erythritol 2,4-cyclodiphosphate (ME-CPP) with a corresponding release of cytidine 5-monophosphate (CMP). This is 2-C-methyl-D-erythritol 2,4-cyclodiphosphate synthase from Shewanella oneidensis (strain ATCC 700550 / JCM 31522 / CIP 106686 / LMG 19005 / NCIMB 14063 / MR-1).